A 576-amino-acid polypeptide reads, in one-letter code: Tudor and KH domain-containing protein homolog (576 aa).

Positions glutamate 40–glutamine 60 are disordered. 2 KH domains span residues glutamate 65 to leucine 127 and valine 136 to leucine 199. The span at leucine 209–arginine 224 shows a compositional bias: basic and acidic residues. The segment at leucine 209 to alanine 253 is disordered. Residues serine 232–serine 243 are compositionally biased toward low complexity. The region spanning alanine 310 to leucine 375 is the Tudor domain. The interval alanine 556–histidine 576 is disordered. Residues asparagine 561–histidine 576 are compositionally biased toward low complexity.

Belongs to the Tdrkh family. As to quaternary structure, interacts (via C-terminus) with AGO3 (via the N-terminal region when symmetrically methylated on arginine residues); this interaction is RNA-independent and may be required for AGO3 localization to the nuage. Interacts (via Tudor domain) with piwi (via N-terminus). Interacts with tral and me31B. In terms of tissue distribution, ovaries (at protein level). Expressed in the ovary and testis.

The protein resides in the cytoplasm. It is found in the nucleus. The protein localises to the cytoplasmic ribonucleoprotein granule. Its function is as follows. Involved in the piwi-interacting RNA (piRNA) metabolic process, which mediates the repression of transposable elements during meiosis by forming complexes composed of piRNAs and Piwi proteins, and governs the methylation and subsequent repression of transposons which is essential for germline integrity. Likely to act by recruiting Piwi proteins such as AGO3 and piwi to the piRNA biogenesis machinery in the nuage. Required for the final steps of primary piRNA biogenesis by participating in the 3' end-trimming of piwi-bound intermediates into mature piRNAs. This Drosophila melanogaster (Fruit fly) protein is Tudor and KH domain-containing protein homolog.